The primary structure comprises 391 residues: METFLFTSESVNEGHPDKLCDQISDAVLDACLAQDPDSKVACETCTKTNMVMVFGEITTKADIDYEKIVRDTCRTIGFVSDDVGLDADNCKVLVNIEQQSPDIAQGVHGHLTKRPEEIGAGDQGHMFGYATDETPELMPLSHVLATKLGARLTEVRKNGTCSWLRPDGKTQVTVEYHNENGAMVPLRVHTVLISTQHDETVTNDEIAADLKEHVIKPVIPEKYLDEKTIFHLNPSGRFVIGGPHGDAGLTGRKIIIDTYGGWGAHGGGAFSGKDPTKVDRSGAYIVRQAAKSIVANGLARRCIVQVSYAIGVPEPLSVFVDSYGTGKIPDKEILKIVKENFDFRPGMIAINLDLKRGGNGRFLKTAAYGHFGRDDPDFTWEVVKPLKWEKA.

E9 provides a ligand contact to Mg(2+). ATP is bound at residue H15. E43 contributes to the K(+) binding site. L-methionine contacts are provided by E56 and Q99. ATP-binding positions include 167 to 169 (DGK), 235 to 238 (SGRF), D246, 252 to 253 (RK), A269, K273, and K277. An L-methionine-binding site is contributed by D246. K277 is an L-methionine binding site.

Belongs to the AdoMet synthase family. In terms of assembly, homotetramer. The cofactor is Mn(2+). Mg(2+) is required as a cofactor. It depends on Co(2+) as a cofactor. K(+) serves as cofactor.

It is found in the cytoplasm. It catalyses the reaction L-methionine + ATP + H2O = S-adenosyl-L-methionine + phosphate + diphosphate. The protein operates within amino-acid biosynthesis; S-adenosyl-L-methionine biosynthesis; S-adenosyl-L-methionine from L-methionine: step 1/1. In terms of biological role, catalyzes the formation of S-adenosylmethionine from methionine and ATP. The reaction comprises two steps that are both catalyzed by the same enzyme: formation of S-adenosylmethionine (AdoMet) and triphosphate, and subsequent hydrolysis of the triphosphate. The polypeptide is S-adenosylmethionine synthase 5 (METK5) (Vitis vinifera (Grape)).